Consider the following 155-residue polypeptide: uncharacterized protein (155 aa).

It belongs to the mimivirus L6/L7/L57 family.

This is an uncharacterized protein from Acanthamoeba polyphaga (Amoeba).